A 500-amino-acid polypeptide reads, in one-letter code: E3 ubiquitin-protein ligase TRIM69 (500 aa).

Residues 1 to 152 form a necessary for nuclear localization region; the sequence is MEVSTNPSSN…SVGQSKEFLQ (152 aa). An RING-type zinc finger spans residues 41–82; the sequence is CPLCNDWFRDPLMLSCGHNFCEACIQDFWRLQAKETFCPECK. Residues 161 to 255 adopt a coiled-coil conformation; it reads TEELAIQQGQ…QCLLAKDMLV (95 aa). One can recognise a B30.2/SPRY domain in the interval 305–500; sequence PIQYMVWREM…KEPLHILHPQ (196 aa). Ser-341 is subject to Phosphoserine.

This sequence belongs to the TRIM/RBCC family. Homo-multimer; required for antiviral activity. Interacts with PML. Post-translationally, phosphorylated. Phosphorylation is necessary for nuclear localization.

It is found in the cytoplasm. The protein localises to the nucleus. Its subcellular location is the nucleus speckle. It localises to the cytoskeleton. The protein resides in the microtubule organizing center. It is found in the centrosome. The catalysed reaction is S-ubiquitinyl-[E2 ubiquitin-conjugating enzyme]-L-cysteine + [acceptor protein]-L-lysine = [E2 ubiquitin-conjugating enzyme]-L-cysteine + N(6)-ubiquitinyl-[acceptor protein]-L-lysine.. The protein operates within protein modification; protein ubiquitination. E3 ubiquitin ligase that plays an important role in antiviral immunity by restricting different viral infections including dengue virus or vesicular stomatitis indiana virus. Ubiquitinates viral proteins such as dengue virus NS3 thereby limiting infection. In addition, acts as a key mediator of type I interferon induced microtubule stabilization by directly associating to microtubules independently of its E3 ligase activity. Also plays a role in cataract formation together with TP53. Mechanistically, inhibits UVB-induced cell apoptosis and reactive oxygen species (ROS) production by inducing TP53 ubiquitination. Regulates centrosome dynamics and mitotic progression by ubiquitinating STK3/MST2; leading to its redistribution to the perinuclear cytoskeleton and subsequent phosphorylation by PLK1. The chain is E3 ubiquitin-protein ligase TRIM69 (TRIM69) from Homo sapiens (Human).